Consider the following 95-residue polypeptide: Aspartyl/glutamyl-tRNA(Asn/Gln) amidotransferase subunit C (95 aa).

Belongs to the GatC family. Heterotrimer of A, B and C subunits.

The catalysed reaction is L-glutamyl-tRNA(Gln) + L-glutamine + ATP + H2O = L-glutaminyl-tRNA(Gln) + L-glutamate + ADP + phosphate + H(+). It catalyses the reaction L-aspartyl-tRNA(Asn) + L-glutamine + ATP + H2O = L-asparaginyl-tRNA(Asn) + L-glutamate + ADP + phosphate + 2 H(+). In terms of biological role, allows the formation of correctly charged Asn-tRNA(Asn) or Gln-tRNA(Gln) through the transamidation of misacylated Asp-tRNA(Asn) or Glu-tRNA(Gln) in organisms which lack either or both of asparaginyl-tRNA or glutaminyl-tRNA synthetases. The reaction takes place in the presence of glutamine and ATP through an activated phospho-Asp-tRNA(Asn) or phospho-Glu-tRNA(Gln). The protein is Aspartyl/glutamyl-tRNA(Asn/Gln) amidotransferase subunit C of Phenylobacterium zucineum (strain HLK1).